The chain runs to 119 residues: Large ribosomal subunit protein bL20 (119 aa).

The protein belongs to the bacterial ribosomal protein bL20 family.

Functionally, binds directly to 23S ribosomal RNA and is necessary for the in vitro assembly process of the 50S ribosomal subunit. It is not involved in the protein synthesizing functions of that subunit. This chain is Large ribosomal subunit protein bL20, found in Teredinibacter turnerae (strain ATCC 39867 / T7901).